A 192-amino-acid polypeptide reads, in one-letter code: Ribosome maturation factor RimM (192 aa).

Residues 116 to 192 (PGEYYWVDLI…RIIVDWQPDY (77 aa)) form the PRC barrel domain.

Belongs to the RimM family. As to quaternary structure, binds ribosomal protein uS19.

The protein localises to the cytoplasm. Functionally, an accessory protein needed during the final step in the assembly of 30S ribosomal subunit, possibly for assembly of the head region. Essential for efficient processing of 16S rRNA. May be needed both before and after RbfA during the maturation of 16S rRNA. It has affinity for free ribosomal 30S subunits but not for 70S ribosomes. This Verminephrobacter eiseniae (strain EF01-2) protein is Ribosome maturation factor RimM.